We begin with the raw amino-acid sequence, 333 residues long: Fructose-1,6-bisphosphatase class 1 (333 aa).

Positions 90, 112, 114, and 115 each coordinate Mg(2+). Residues 115-118 (DGSS), Asn-207, and Lys-273 each bind substrate. Glu-279 provides a ligand contact to Mg(2+).

Belongs to the FBPase class 1 family. In terms of assembly, homotetramer. Requires Mg(2+) as cofactor.

It localises to the cytoplasm. It carries out the reaction beta-D-fructose 1,6-bisphosphate + H2O = beta-D-fructose 6-phosphate + phosphate. The protein operates within carbohydrate biosynthesis; gluconeogenesis. This chain is Fructose-1,6-bisphosphatase class 1, found in Azoarcus sp. (strain BH72).